The sequence spans 425 residues: tRNA(Ile)-lysidine synthase (425 aa).

27 to 32 (SGGLDS) contributes to the ATP binding site.

The protein belongs to the tRNA(Ile)-lysidine synthase family.

The protein localises to the cytoplasm. It catalyses the reaction cytidine(34) in tRNA(Ile2) + L-lysine + ATP = lysidine(34) in tRNA(Ile2) + AMP + diphosphate + H(+). Ligates lysine onto the cytidine present at position 34 of the AUA codon-specific tRNA(Ile) that contains the anticodon CAU, in an ATP-dependent manner. Cytidine is converted to lysidine, thus changing the amino acid specificity of the tRNA from methionine to isoleucine. The protein is tRNA(Ile)-lysidine synthase of Streptococcus pneumoniae (strain JJA).